We begin with the raw amino-acid sequence, 540 residues long: Raucaffricine-O-beta-D-glucosidase (540 aa).

A beta-D-glucoside-binding positions include Q36, H140, and 185–186 (NE). The active-site Proton donor is E186. An intrachain disulfide couples C221 to C230. A beta-D-glucoside contacts are provided by residues Y347, E420, W469, 476-477 (EW), and F485. E420 serves as the catalytic Nucleophile.

It belongs to the glycosyl hydrolase 1 family.

The catalysed reaction is raucaffricine + H2O = vomilenine + D-glucose. The enzyme catalyses vomilenine + UDP-alpha-D-glucose = raucaffricine + UDP + H(+). Functionally, glucosidase specifically involved in alkaloid biosynthesis leading to the accumulation of several alkaloids, including ajmaline, an important plant-derived pharmaceutical used in the treatment of heart disorders. In Rauvolfia serpentina (Serpentine wood), this protein is Raucaffricine-O-beta-D-glucosidase.